A 165-amino-acid chain; its full sequence is Chorismate pyruvate-lyase (165 aa).

Residues Met35, Arg77, Leu115, and Glu156 each contribute to the substrate site.

This sequence belongs to the UbiC family. In terms of assembly, monomer.

The protein localises to the cytoplasm. The catalysed reaction is chorismate = 4-hydroxybenzoate + pyruvate. Its pathway is cofactor biosynthesis; ubiquinone biosynthesis. In terms of biological role, removes the pyruvyl group from chorismate, with concomitant aromatization of the ring, to provide 4-hydroxybenzoate (4HB) for the ubiquinone pathway. The polypeptide is Chorismate pyruvate-lyase (Escherichia coli O7:K1 (strain IAI39 / ExPEC)).